The primary structure comprises 102 residues: Small ribosomal subunit protein uS10 (102 aa).

It belongs to the universal ribosomal protein uS10 family. Part of the 30S ribosomal subunit.

Its function is as follows. Involved in the binding of tRNA to the ribosomes. The protein is Small ribosomal subunit protein uS10 of Clostridium beijerinckii (strain ATCC 51743 / NCIMB 8052) (Clostridium acetobutylicum).